We begin with the raw amino-acid sequence, 283 residues long: MRRIGAHVSIAGGIENAPMRAREIGATAFAMFTKNQRQWNAPPLTTQSIDAFKNNCAECGYHARHILPHDSYLINLGSPDPAKLERSRKAFTDEMQRVEALGLSLLNFHPGSHLNETGIDNCLNTIAESVNIALDNSSGVTAVLENTAGQGSNLGHTFEQLAAIIDQIEDKTRVGVCLDTCHLFAAGYDLRTSEAVEATFNEFDSIVSLSYLRGMHLNDAKLDLGSKRDRHESIGSGFIGNDGFAAIIQHPACDEIPLILETPNPDIWNREIEMLYQMEGDKR.

9 residues coordinate Zn(2+): His-69, His-109, Glu-145, Asp-179, His-182, His-216, Asp-229, His-231, and Glu-261.

It belongs to the AP endonuclease 2 family. The cofactor is Zn(2+).

It carries out the reaction Endonucleolytic cleavage to 5'-phosphooligonucleotide end-products.. In terms of biological role, endonuclease IV plays a role in DNA repair. It cleaves phosphodiester bonds at apurinic or apyrimidinic (AP) sites, generating a 3'-hydroxyl group and a 5'-terminal sugar phosphate. The protein is Probable endonuclease 4 of Prosthecochloris aestuarii (strain DSM 271 / SK 413).